We begin with the raw amino-acid sequence, 420 residues long: Glutamyl-tRNA reductase (420 aa).

Residues 49-52, serine 109, 114-116, and glutamine 120 contribute to the substrate site; these read TCNR and EPQ. Catalysis depends on cysteine 50, which acts as the Nucleophile. 189 to 194 lines the NADP(+) pocket; it reads GAGETI.

The protein belongs to the glutamyl-tRNA reductase family. As to quaternary structure, homodimer.

The catalysed reaction is (S)-4-amino-5-oxopentanoate + tRNA(Glu) + NADP(+) = L-glutamyl-tRNA(Glu) + NADPH + H(+). It participates in porphyrin-containing compound metabolism; protoporphyrin-IX biosynthesis; 5-aminolevulinate from L-glutamyl-tRNA(Glu): step 1/2. Its function is as follows. Catalyzes the NADPH-dependent reduction of glutamyl-tRNA(Glu) to glutamate 1-semialdehyde (GSA). This Proteus mirabilis (strain HI4320) protein is Glutamyl-tRNA reductase.